The sequence spans 170 residues: ATP synthase subunit b (170 aa).

A helical membrane pass occupies residues 5 to 25; the sequence is YFIPCLLLPTMMLASGGGGET.

The protein belongs to the ATPase B chain family. In terms of assembly, F-type ATPases have 2 components, F(1) - the catalytic core - and F(0) - the membrane proton channel. F(1) has five subunits: alpha(3), beta(3), gamma(1), delta(1), epsilon(1). F(0) has three main subunits: a(1), b(2) and c(10-14). The alpha and beta chains form an alternating ring which encloses part of the gamma chain. F(1) is attached to F(0) by a central stalk formed by the gamma and epsilon chains, while a peripheral stalk is formed by the delta and b chains.

It localises to the cell inner membrane. Its function is as follows. F(1)F(0) ATP synthase produces ATP from ADP in the presence of a proton or sodium gradient. F-type ATPases consist of two structural domains, F(1) containing the extramembraneous catalytic core and F(0) containing the membrane proton channel, linked together by a central stalk and a peripheral stalk. During catalysis, ATP synthesis in the catalytic domain of F(1) is coupled via a rotary mechanism of the central stalk subunits to proton translocation. Component of the F(0) channel, it forms part of the peripheral stalk, linking F(1) to F(0). This chain is ATP synthase subunit b, found in Wolinella succinogenes (strain ATCC 29543 / DSM 1740 / CCUG 13145 / JCM 31913 / LMG 7466 / NCTC 11488 / FDC 602W) (Vibrio succinogenes).